Reading from the N-terminus, the 590-residue chain is MQGTDNAPPGAQANKSSSPRRIRHVRRHYTSNDHRHTPSTAESNPVQRIRSGEECTVELSMSPGQPLVEEQPLVEERPPVEEQPLVEEQPLVEEQPLVEEQPLVEEQPLVEGQPLVEEQPLVEGQPPVEGQPLVEEQPLVEGQPLVEGQPLVEGQPLVEGQPLVGGQPLVGGQPLVEGQPLVEGQPPVKVQPLVEGQPLGNMVSLYDQLPRGSILSLQKGLTLAGVTTPVDMPPLAGVILLCAVLPLASVIPPASATPFAAVIPPAAVIPLPGFLPLGRLLHLADLLLRAGVLLLAGILPLAGAPPLAGVPPLAVALPLAGAPPLAGVPPLAGAPPLAGALPRAGVLRRAGVLRRAGVLRRAGVLRRAGVLRRAGVLRRAGVLRRAGVLRRAGVLRRAGVLRRADVLRRADVVLLAGVQQLADVQRLADVQRLADVQRLADVQRLADVQRLVCVTPLSVVSPLAAVIPAVAVIPVVAVIRVAAVIMLEKMQPQGSSPQLQMGCRRIRQRRSSPRTCQKLRQERDRAGISWREHVGRHMLCSSTRSRYCSHRLGAACRSHCRLRCGVLCLPHALTQPTRQERGVAEMMSTS.

The interval 1–71 is disordered; sequence MQGTDNAPPG…SPGQPLVEEQ (71 aa). The segment covering 18–29 has biased composition (basic residues); the sequence is SPRRIRHVRRHY. 27 consecutive repeat copies span residues 66 to 71, 72 to 77, 78 to 83, 84 to 89, 90 to 95, 96 to 101, 102 to 107, 108 to 113, 114 to 119, 120 to 125, 126 to 131, 132 to 137, 138 to 143, 144 to 149, 150 to 155, 156 to 161, 162 to 167, 168 to 173, 174 to 179, 180 to 185, 300 to 305, 306 to 311, 312 to 317, 318 to 323, 324 to 329, 330 to 335, and 336 to 341. Positions 66 to 185 are 20 X 6 AA tandem repeats of P-[LP]-V-[EG]-[EG]-[QR]; that stretch reads PLVEEQPLVE…VEGQPLVEGQ (120 aa). An 8 X 6 AA approximate tandem repeats of P-L-A-[GV]-[AV]-[PL] region spans residues 300-347; the sequence is PLAGAPPLAGVPPLAVALPLAGAPPLAGVPPLAGAPPLAGALPRAGVL. One copy of the 2-8; approximate repeat lies at 342 to 347; the sequence is PRAGVL. A run of 16 repeats spans residues 348–353, 354–359, 360–365, 366–371, 372–377, 378–383, 384–389, 390–395, 396–401, 402–407, 408–413, 419–424, 425–430, 431–436, 437–442, and 443–448. The segment at 348–413 is 11 X 6 AA tandem repeats of approximate R-R-A-[GD]-V-[LV]; sequence RRAGVLRRAG…ADVLRRADVV (66 aa). A 6 X 6 AA approximate tandem repeats of Q-[QR]-L-A-D-V region spans residues 419 to 454; it reads QQLADVQRLADVQRLADVQRLADVQRLADVQRLVCV. The 4-6; approximate repeat unit spans residues 449–454; the sequence is QRLVCV.

As to expression, somatic ovarian tissue.

The protein is Ovarian abundant message protein (OAM) of Ascaris suum (Pig roundworm).